Reading from the N-terminus, the 319-residue chain is Probable arabinan endo-1,5-alpha-L-arabinosidase C (319 aa).

Residues methionine 1–alanine 16 form the signal peptide. Aspartate 31 (proton acceptor) is an active-site residue. The N-linked (GlcNAc...) asparagine glycan is linked to asparagine 190. Catalysis depends on glutamate 198, which acts as the Proton donor. Asparagine 222 is a glycosylation site (N-linked (GlcNAc...) asparagine).

The protein belongs to the glycosyl hydrolase 43 family.

The protein localises to the secreted. The catalysed reaction is Endohydrolysis of (1-&gt;5)-alpha-arabinofuranosidic linkages in (1-&gt;5)-arabinans.. Its pathway is glycan metabolism; L-arabinan degradation. Endo-1,5-alpha-L-arabinanase involved in degradation of pectin. Its preferred substrate is linear 1,5-alpha-L-arabinan. This Aspergillus clavatus (strain ATCC 1007 / CBS 513.65 / DSM 816 / NCTC 3887 / NRRL 1 / QM 1276 / 107) protein is Probable arabinan endo-1,5-alpha-L-arabinosidase C (abnC).